The sequence spans 101 residues: Large ribosomal subunit protein uL24c (101 aa).

Belongs to the universal ribosomal protein uL24 family. Part of the 50S ribosomal subunit.

It localises to the plastid. It is found in the chloroplast. Its function is as follows. One of two assembly initiator proteins, it binds directly to the 5'-end of the 23S rRNA, where it nucleates assembly of the 50S subunit. In Guillardia theta (Cryptophyte), this protein is Large ribosomal subunit protein uL24c (rpl24).